A 124-amino-acid chain; its full sequence is Small ribosomal subunit protein uS12 (124 aa).

The interval 1-25 (MARINQLVRKPRRARAKKSDVPALE) is disordered. Position 89 is a 3-methylthioaspartic acid (aspartate 89). The interval 103 to 124 (DTAGVSGRRRGRSKYGEKKPKE) is disordered.

Belongs to the universal ribosomal protein uS12 family. In terms of assembly, part of the 30S ribosomal subunit. Contacts proteins S8 and S17. May interact with IF1 in the 30S initiation complex.

In terms of biological role, with S4 and S5 plays an important role in translational accuracy. Its function is as follows. Interacts with and stabilizes bases of the 16S rRNA that are involved in tRNA selection in the A site and with the mRNA backbone. Located at the interface of the 30S and 50S subunits, it traverses the body of the 30S subunit contacting proteins on the other side and probably holding the rRNA structure together. The combined cluster of proteins S8, S12 and S17 appears to hold together the shoulder and platform of the 30S subunit. The protein is Small ribosomal subunit protein uS12 of Coxiella burnetii (strain Dugway 5J108-111).